The primary structure comprises 1320 residues: FERM and PDZ domain-containing protein 4 (1320 aa).

The WW domain occupies 33-66 (QVPPYGWEMMTNRDGRDYFINHMTQAIPFDDPRF). In terms of domain architecture, PDZ spans 78–155 (KVEMRRDPVL…SILLTVIQPY (78 aa)). The 316-residue stretch at 204–519 (NVLKVYLENG…GYYRLLVDSR (316 aa)) folds into the FERM domain. 6 disordered regions span residues 809–847 (APPPGFRDSSDEEDTQSQATSFHEDKEQGSSLQNEEIPV), 897–927 (YSPESSSDSGNETNSSEMTEGSELAAAQKQS), 949–981 (TEFPTSKAPSVGLPPKSSHGLAARPATDLPPKV), 1024–1050 (KRKSKLPEGEGKSPLSGNIPGKKQQGT), 1114–1139 (PRGPGLGNREAEGKEDGTVEGGADDA), and 1204–1274 (GHFS…ATFE). Residues 900-913 (ESSSDSGNETNSSE) show a composition bias toward low complexity. A compositionally biased stretch (polar residues) spans 1204–1217 (GHFSLQSSQGSSVD). Over residues 1223-1232 (GSSSSACATP) the composition is skewed to low complexity.

In terms of assembly, interacts (via C-terminus) with DLG1, DLG2, DLG3 and DLG4/PSD95. Interacts (via N-terminus) with ARHGEF7; the interaction is mediated by the PDZ domain. Interacts with GPSM2 (via TPR repeat region). Expressed in various regions of the brain, including cortex, hippocampus, cerebellum, olfactory bulb and medial habenular nucleus.

It is found in the cell projection. The protein resides in the dendritic spine. Its function is as follows. Positive regulator of dendritic spine morphogenesis and density. Required for the maintenance of excitatory synaptic transmission. Binds phosphatidylinositol 4,5-bisphosphate. This is FERM and PDZ domain-containing protein 4 (Frmpd4) from Mus musculus (Mouse).